The following is a 358-amino-acid chain: MYGEWGMGNILMMFHVYLVQGFRSEHGPVKDFSFERSSRSMLERSEQQIRAASSLEELLQIAHSEDWKLWRCRLKLKSLASMDSRSASHRSTRFAATFYDTETLKVIDEEWQRTQCSPRETCVEVASELGKTTNTFFKPPCVNVFRCGGCCNEEGVMCMNTSTSYISKQLFEISVPLTSVPELVPVKIANHTGCKCLPTGPRHPYSIIRRSIQTPEEDECPHSKKLCPIDMLWDNTKCKCVLQDETPLPGTEDHSYLQEPTLCGPHMTFDEDRCECVCKAPCPGDLIQHPENCSCFECKESLESCCQKHKIFHPDTCSCEDRCPFHTRTCASRKPACGKHWRFPKETRAQGLYSQENP.

An N-terminal signal peptide occupies residues 1 to 21; that stretch reads MYGEWGMGNILMMFHVYLVQG. Residues 22-93 constitute a propeptide that is removed on maturation; sequence FRSEHGPVKD…SRSASHRSTR (72 aa). 3 disulfide bridges follow: C116–C158, C147–C194, and C151–C196. 2 N-linked (GlcNAc...) asparagine glycosylation sites follow: N160 and N190. Positions 211–358 are excised as a propeptide; it reads SIQTPEEDEC…AQGLYSQENP (148 aa). A 1; approximate repeat occupies 227-242; the sequence is CPIDMLWDNTKCKCVL. Positions 227–323 are 4 X 16 AA repeats of C-X(10)-C-X-C-X(1,3)-C; the sequence is CPIDMLWDNT…PDTCSCEDRC (97 aa). 3 consecutive repeat copies span residues 263–278, 282–298, and 306–323. N-linked (GlcNAc...) asparagine glycosylation is present at N292.

It belongs to the PDGF/VEGF growth factor family. In terms of assembly, homodimer; non-covalent and antiparallel. Post-translationally, undergoes a complex proteolytic maturation which generates a variety of processed secreted forms with increased activity toward VEGFR-3 and VEGFR-2. VEGF-D first form an antiparallel homodimer linked by disulfide bonds before secretion. The fully processed VEGF-D is composed mostly of two VEGF homology domains (VHDs) bound by non-covalent interactions. As to expression, highly expressed in fetal and adult lung.

The protein localises to the secreted. Functionally, growth factor active in angiogenesis, lymphangiogenesis and endothelial cell growth, stimulating their proliferation and migration and also has effects on the permeability of blood vessels. May function in the formation of the venous and lymphatic vascular systems during embryogenesis, and also in the maintenance of differentiated lymphatic endothelium in adults. Binds and activates VEGFR-3 (Flt4) receptor. This is Vascular endothelial growth factor D from Mus musculus (Mouse).